A 551-amino-acid chain; its full sequence is Adenine deaminase (551 aa).

It belongs to the metallo-dependent hydrolases superfamily. Adenine deaminase family. Mn(2+) serves as cofactor.

The enzyme catalyses adenine + H2O + H(+) = hypoxanthine + NH4(+). The sequence is that of Adenine deaminase from Leuconostoc citreum (strain KM20).